Reading from the N-terminus, the 399-residue chain is Protein TWIN LOV 1 (399 aa).

The PAS 1 domain occupies 26–97; that stretch reads LWIKEALEEL…MEIREAIREE (72 aa). In terms of domain architecture, PAC 1 spans 98–153; that stretch reads RSVQVSLLNYRKSGSPFWMLFHMCPVFGKDDGKVTNFVAVQVPISGREHHRKKLRN. Positions 249–320 constitute a PAS 2 domain; the sequence is SLVISLGRIK…EMKECILKGQ (72 aa). Residue Cys-296 is modified to S-4a-FMN cysteine. Residues 320-376 enclose the PAC 2 domain; sequence QSCTVQILNYSNRKDKSSFWNLLHISPVRNASGKTAYFVGVQVEASCRNTEIKELRP.

As to quaternary structure, interacts with VTC2, VTC5 and BLH10. In terms of processing, FMN binds covalently to cysteine after exposure to blue light and is reversed in the dark.

In Arabidopsis thaliana (Mouse-ear cress), this protein is Protein TWIN LOV 1 (TLP1).